The primary structure comprises 381 residues: 2-methylcitrate synthase 1 (381 aa).

His-192 contacts substrate. Residue His-227 is part of the active site. CoA is bound at residue Arg-260–Phe-264. The active site involves His-266. Position 275 (Arg-275) interacts with substrate. Asp-317 is an active-site residue. Arg-342 and Arg-361 together coordinate substrate.

The protein belongs to the citrate synthase family. In terms of assembly, homodimer.

The catalysed reaction is propanoyl-CoA + oxaloacetate + H2O = (2S,3S)-2-methylcitrate + CoA + H(+). It carries out the reaction oxaloacetate + acetyl-CoA + H2O = citrate + CoA + H(+). Its pathway is carbohydrate metabolism; tricarboxylic acid cycle. Catalyzes the Claisen condensation of propionyl-CoA and oxaloacetate (OAA) to yield 2-methylcitrate (2-MC) and CoA. Also catalyzes the condensation of oxaloacetate with propionyl-CoA but with a lower specificity. The polypeptide is 2-methylcitrate synthase 1 (prpC1) (Corynebacterium glutamicum (strain ATCC 13032 / DSM 20300 / JCM 1318 / BCRC 11384 / CCUG 27702 / LMG 3730 / NBRC 12168 / NCIMB 10025 / NRRL B-2784 / 534)).